The chain runs to 362 residues: 3-dehydroquinate synthase (362 aa).

This sequence belongs to the archaeal-type DHQ synthase family.

It catalyses the reaction 2-amino-2,3,7-trideoxy-D-lyxo-hept-6-ulosonate + NAD(+) + H2O = 3-dehydroquinate + NH4(+) + NADH + H(+). In terms of biological role, catalyzes the oxidative deamination and cyclization of 2-amino-3,7-dideoxy-D-threo-hept-6-ulosonic acid (ADH) to yield 3-dehydroquinate (DHQ), which is fed into the canonical shikimic pathway of aromatic amino acid biosynthesis. In Methanothrix thermoacetophila (strain DSM 6194 / JCM 14653 / NBRC 101360 / PT) (Methanosaeta thermophila), this protein is 3-dehydroquinate synthase.